A 277-amino-acid chain; its full sequence is 4-hydroxy-tetrahydrodipicolinate reductase (277 aa).

NAD(+) is bound by residues 11-16 and 110-112; these read GALGRM and GTT. The active-site Proton donor/acceptor is the histidine 166. (S)-2,3,4,5-tetrahydrodipicolinate is bound at residue histidine 167. Lysine 170 functions as the Proton donor in the catalytic mechanism. (S)-2,3,4,5-tetrahydrodipicolinate is bound at residue 176–177; that stretch reads GT.

It belongs to the DapB family.

It is found in the cytoplasm. The enzyme catalyses (S)-2,3,4,5-tetrahydrodipicolinate + NAD(+) + H2O = (2S,4S)-4-hydroxy-2,3,4,5-tetrahydrodipicolinate + NADH + H(+). The catalysed reaction is (S)-2,3,4,5-tetrahydrodipicolinate + NADP(+) + H2O = (2S,4S)-4-hydroxy-2,3,4,5-tetrahydrodipicolinate + NADPH + H(+). It participates in amino-acid biosynthesis; L-lysine biosynthesis via DAP pathway; (S)-tetrahydrodipicolinate from L-aspartate: step 4/4. Functionally, catalyzes the conversion of 4-hydroxy-tetrahydrodipicolinate (HTPA) to tetrahydrodipicolinate. This Parasynechococcus marenigrum (strain WH8102) protein is 4-hydroxy-tetrahydrodipicolinate reductase.